The chain runs to 329 residues: MLRVFIFFVFLGSGLTGRIKPQVTCKYFISENNTWYKYNVTILNSSIILPAYNTIPSNAAGISCTCHDIDYLQKNNISIHYNTSILKTFQDIRIIRCGMKNISEIAGGFGKELKFLDLRYNDLQVIDYNILRKLIRSNTPTYLYYNNLMCGKRNCPLYYFLLKQEQTYLKRLPQFFLRRISFSNNNTYLYHFLSCGNKPGHEFLEYQTKYCRTKFPEINITVNQLIAKKNTERYKSCYPLVFISILCSCISFLFLFICLLRSICKKYSCTKQDKSSHNYIPLIPSYTFSLKKHRHPETAVVEDHTTSANSPIVYIPTTEEKKVSCSRRK.

The first 31 residues, 1–31 (MLRVFIFFVFLGSGLTGRIKPQVTCKYFISE), serve as a signal peptide directing secretion. N-linked (GlcNAc...) asparagine; by host glycosylation is found at Asn32, Asn39, Asn44, Asn76, Asn82, and Asn101. The Extracellular portion of the chain corresponds to 32–239 (NNTWYKYNVT…NTERYKSCYP (208 aa)). Residues 112 to 133 (ELKFLDLRYNDLQVIDYNILRK) form an LRR repeat. Residues Asn185 and Asn219 are each glycosylated (N-linked (GlcNAc...) asparagine; by host). Cys195 and Cys237 are joined by a disulfide. The helical transmembrane segment at 240–260 (LVFISILCSCISFLFLFICLL) threads the bilayer. Topologically, residues 261-329 (RSICKKYSCT…EKKVSCSRRK (69 aa)) are cytoplasmic.

The protein belongs to the asfivirus I329L family. Post-translationally, highly glycosylated.

The protein resides in the host endoplasmic reticulum membrane. It is found in the host Golgi apparatus membrane. In terms of biological role, viral TLR3 homolog that probably prevents TLR3 dimerization and subsequent induction of IFN. Inhibits dsRNA-stimulated activation of NF-kB and IRF3. The sequence is that of Transmembrane protein I329L from Ornithodoros (relapsing fever ticks).